We begin with the raw amino-acid sequence, 44 residues long: Relaxin (44 aa).

Glutamine 1 carries the post-translational modification Pyrrolidone carboxylic acid. 3 disulfides stabilise this stretch: cysteine 3–cysteine 31, cysteine 15–cysteine 44, and cysteine 30–cysteine 35.

It belongs to the insulin family. In terms of assembly, heterodimer of a B chain and an A chain linked by two disulfide bonds.

It is found in the secreted. This Carcharias taurus (Sand tiger shark) protein is Relaxin.